The sequence spans 369 residues: Glycolate oxidase 1 (369 aa).

The FMN hydroxy acid dehydrogenase domain maps to 1–360; the sequence is MGEITNVMEY…TRKHIITESD (360 aa). Glyoxylate is bound at residue tyrosine 25. Residues 78–80, serine 107, 128–130, and threonine 156 each bind FMN; these read PTA and QLY. A glyoxylate-binding site is contributed by tyrosine 130. Arginine 165 provides a ligand contact to glyoxylate. FMN-binding residues include lysine 231 and serine 253. 2 residues coordinate glyoxylate: histidine 255 and arginine 258. Histidine 255 functions as the Proton acceptor in the catalytic mechanism. Residues 286 to 290 and 309 to 310 contribute to the FMN site; these read DGGVR and GR.

It belongs to the FMN-dependent alpha-hydroxy acid dehydrogenase family. As to quaternary structure, homotetramer. It depends on FMN as a cofactor.

Its subcellular location is the peroxisome. It carries out the reaction glycolate + O2 = glyoxylate + H2O2. It participates in photosynthesis; photorespiration; glycine from 2-phosphoglycolate: step 2/3. Functionally, catalyzes the oxidation of glycolate to glyoxylate, with a reduction of O2 to H2O2. Is an essential enzyme in photorespiration in plants. Photorespiration plays a vital role in C4 photosynthesis in Z.mays and is essential for maize seedling development and maintaining low (non-toxic) levels of glycolate. This Zea mays (Maize) protein is Glycolate oxidase 1.